The following is a 482-amino-acid chain: Rho GTPase-activating protein 15 (482 aa).

Ser-51, Ser-111, Ser-205, Ser-208, and Ser-250 each carry phosphoserine. The 112-residue stretch at 87–198 folds into the PH domain; it reads MVEKEGYLQK…WFHAIKNAID (112 aa). One can recognise a Rho-GAP domain in the interval 288 to 477; it reads SHLHTVCERE…FMLTEYDKIF (190 aa).

Its subcellular location is the cytoplasm. The protein localises to the membrane. Functionally, GTPase activator for the Rho-type GTPases by converting them to an inactive GDP-bound state. Has activity toward RAC1. Overexpression results in an increase in actin stress fibers and cell contraction. This is Rho GTPase-activating protein 15 (Arhgap15) from Rattus norvegicus (Rat).